Here is a 194-residue protein sequence, read N- to C-terminus: Calcium-binding protein J (194 aa).

EF-hand domains are found at residues 62–97 (WDKD…MTKA) and 98–133 (PVVE…AVAC). Positions 75, 77, 79, 86, 111, 113, 115, 117, and 122 each coordinate Ca(2+).

Belongs to the recoverin family.

The sequence is that of Calcium-binding protein J (cbpJ) from Dictyostelium discoideum (Social amoeba).